A 221-amino-acid polypeptide reads, in one-letter code: uncharacterized protein (221 aa).

The disordered stretch occupies residues 1–30 (MVPPNPAHQPARRTQPQLQPQSQPRAQPLP). The segment covering 12–25 (RRTQPQLQPQSQPR) has biased composition (polar residues). A helical membrane pass occupies residues 37-57 (VLCIIVALVLLGLLVGLAILI).

Its subcellular location is the membrane. This is an uncharacterized protein from Arabidopsis thaliana (Mouse-ear cress).